A 502-amino-acid chain; its full sequence is Probable glycine dehydrogenase (decarboxylating) subunit 2 (502 aa).

Position 273 is an N6-(pyridoxal phosphate)lysine (Lys273).

Belongs to the GcvP family. C-terminal subunit subfamily. As to quaternary structure, the glycine cleavage system is composed of four proteins: P, T, L and H. In this organism, the P 'protein' is a heterodimer of two subunits. Requires pyridoxal 5'-phosphate as cofactor.

It catalyses the reaction N(6)-[(R)-lipoyl]-L-lysyl-[glycine-cleavage complex H protein] + glycine + H(+) = N(6)-[(R)-S(8)-aminomethyldihydrolipoyl]-L-lysyl-[glycine-cleavage complex H protein] + CO2. Functionally, the glycine cleavage system catalyzes the degradation of glycine. The P protein binds the alpha-amino group of glycine through its pyridoxal phosphate cofactor; CO(2) is released and the remaining methylamine moiety is then transferred to the lipoamide cofactor of the H protein. This chain is Probable glycine dehydrogenase (decarboxylating) subunit 2, found in Thermococcus gammatolerans (strain DSM 15229 / JCM 11827 / EJ3).